The sequence spans 1107 residues: MGSKGAYRYHWQSHNVKHSGVDDMVLLSKITESSIVENLKKRYMDDYIFTYIGSVLISVNPFKQMPYFGEKEIEMYQGAAQYENPPHIYALADSMYRNMIIDRENQCVIISGESGAGKTVAAKYIMSYVSRVSGGGPKVQHVKDIILQSNPLLEAFGNAKTVRNNNSSRFGKYFEIQFSPGGEPDGGKISNFLLEKSRVVMRNPGERSFHIFYQLIEGASPEQKQSLGITSMDYYYYLSLSGSYKVDDIDDKRDFQETLHAMNVIGIFSEEQTLVLQIVAGILHLGNINFKEVGNYAAVESEEFLAFPAYLLGINQDRLKEKLTSRQMDSKWGGKSESIHVTLNVEQACYTRDALAKALHARVFDFLVDSINKAMEKDHEEYNIGVLDIYGFEIFQKNGFEQFCINFVNEKLQQIFIELTLKAEQEEYVQEGIRWTPIEYFNNKIVCDLIESKVNPPGIMSILDDVCATMHAVGEGADQTLLQKLQMQIGSHEHFNSWNQGFIIHHYAGKVSYDMDGFCERNRDVLFMDLIELMQSSELPFIKSLFPENLQADKKGRPTTAGSKIKKQANDLVSTLMKCTPHYIRCIKPNETKKPKDWEESRVKHQVEYLGLKENIRVRRAGYAYRRVFQKFLQRYAILTKATWPVWRGDEKQGVLHLLQSVNMDSDQFQLGRSKVFIKAPESLFLLEEMRERKYDGYARVIQKTWRKFVARKKYVQMREDASDLLLNKKERRRNSINRNFIGDYIGMEEHPELQQFVGKREKIDFADIVTKYDRRFKGVKRDLLLTPKCLYLIGREKVKQGPDKGLVKEVLKRKIEVERILSVSLSTMQDDIFILHEQEYDSLLESVFKTEFLSLLTKRYEEKTQKQLPLKFSNTLELKLKKENWGPWSAGGSRQVQFYQGFGDLAILKPSNKVLQVSIGPGLPKNARPTRRNTVSSRGYSGGTNNNYPMRAAPAPPGCHRNGLTRNQFVHPPRASGNQRSNQKSLYTSMARPPLPRQQSTGSDRLSQTPESLDFLKVPDQGAAGVRRQTTSRPPPAGGRPKPQPKPKPQVPQCKALYAYDAQDTDELSFNANDVIDIIKEDPSGWWTGRLRGKQGLFPNNYVTKI.

The region spanning 19-692 (SGVDDMVLLS…SLFLLEEMRE (674 aa)) is the Myosin motor domain. 112–119 (GESGAGKT) lines the ATP pocket. The actin-binding stretch occupies residues 581-591 (PHYIRCIKPNE). Residues 695 to 724 (YDGYARVIQKTWRKFVARKKYVQMREDASD) form the IQ domain. A TH1 domain is found at 730–922 (KERRRNSINR…NKVLQVSIGP (193 aa)). A disordered region spans residues 920-1052 (IGPGLPKNAR…KPQPKPKPQV (133 aa)). Composition is skewed to polar residues over residues 933 to 949 (RNTVSSRGYSGGTNNNY), 977 to 989 (SGNQRSNQKSLYT), and 998 to 1012 (RQQSTGSDRLSQTPE). Residue serine 1001 is modified to Phosphoserine. Pro residues predominate over residues 1034–1051 (RPPPAGGRPKPQPKPKPQ). The region spanning 1050–1107 (PQVPQCKALYAYDAQDTDELSFNANDVIDIIKEDPSGWWTGRLRGKQGLFPNNYVTKI) is the SH3 domain.

This sequence belongs to the TRAFAC class myosin-kinesin ATPase superfamily. Myosin family. In terms of assembly, interacts with CALM and F-actin. Interacts (via SH3 domain) with SYNJ1, DNM1 and DNM2. Interacts with ARL14EP. Interacts with CARMIL1. As to expression, detected in brain stem, brain cortex, cerebellum, stomach, colon, heart, lung, liver, spleen and kidney. Detected in utricle, cochlea, outer hair cell bundle cuticular plate and vestibular epithelia (at protein level). Detected in cochlea and vestibular tissues. Detected in kidney, lung, spleen and intestine.

The protein resides in the cytoplasm. Its subcellular location is the cytoskeleton. It is found in the cytoplasmic vesicle. The protein localises to the clathrin-coated vesicle. It localises to the cell junction. Its function is as follows. Myosins are actin-based motor molecules with ATPase activity. Unconventional myosins serve in intracellular movements. Their highly divergent tails bind to membranous compartments, which are then moved relative to actin filaments. Binds to membranes containing anionic phospholipids via its tail domain. Involved in clathrin-mediated endocytosis and intracellular movement of clathrin-coated vesicles. Required for normal morphology of the glomerular basement membrane, normal development of foot processes by kidney podocytes and normal kidney function. In dendritic cells, may control the movement of class II-containing cytoplasmic vesicles along the actin cytoskeleton by connecting them with the actin network via ARL14EP and ARL14. The chain is Unconventional myosin-Ie (Myo1e) from Rattus norvegicus (Rat).